Consider the following 253-residue polypeptide: Phosphoribosylaminoimidazole-succinocarboxamide synthase (253 aa).

Belongs to the SAICAR synthetase family.

It catalyses the reaction 5-amino-1-(5-phospho-D-ribosyl)imidazole-4-carboxylate + L-aspartate + ATP = (2S)-2-[5-amino-1-(5-phospho-beta-D-ribosyl)imidazole-4-carboxamido]succinate + ADP + phosphate + 2 H(+). It functions in the pathway purine metabolism; IMP biosynthesis via de novo pathway; 5-amino-1-(5-phospho-D-ribosyl)imidazole-4-carboxamide from 5-amino-1-(5-phospho-D-ribosyl)imidazole-4-carboxylate: step 1/2. This is Phosphoribosylaminoimidazole-succinocarboxamide synthase from Parvibaculum lavamentivorans (strain DS-1 / DSM 13023 / NCIMB 13966).